The primary structure comprises 481 residues: UDP-N-acetylmuramoylalanine--D-glutamate ligase (481 aa).

Position 108–114 (108–114 (GTNGKTS)) interacts with ATP.

The protein belongs to the MurCDEF family.

Its subcellular location is the cytoplasm. The catalysed reaction is UDP-N-acetyl-alpha-D-muramoyl-L-alanine + D-glutamate + ATP = UDP-N-acetyl-alpha-D-muramoyl-L-alanyl-D-glutamate + ADP + phosphate + H(+). It functions in the pathway cell wall biogenesis; peptidoglycan biosynthesis. Cell wall formation. Catalyzes the addition of glutamate to the nucleotide precursor UDP-N-acetylmuramoyl-L-alanine (UMA). This chain is UDP-N-acetylmuramoylalanine--D-glutamate ligase, found in Bifidobacterium longum (strain DJO10A).